Here is a 2387-residue protein sequence, read N- to C-terminus: Paternally-expressed gene 3 protein (2387 aa).

The 83-residue stretch at 44-126 (HQRFRNFLYV…ALLEDYEAMY (83 aa)) folds into the SCAN box domain. Disordered stretches follow at residues 127 to 194 (EPED…RDLA), 262 to 305 (DGHS…ICEA), 321 to 371 (ARSS…AFGG), and 392 to 423 (RYHFDAEGQGPVHDPRGGARKRPFECGGEARR). Composition is skewed to basic and acidic residues over residues 160 to 179 (SERERRRGRSRDMESRDRWP), 291 to 305 (PETKKSAHRRGICEA), 321 to 364 (ARSS…ERGP), and 404 to 423 (HDPRGGARKRPFECGGEARR). The C2H2-type 1 zinc finger occupies 451–473 (YVCDECGRSFAVISEFVEHQIVH). The segment at 492-542 (SEAQSRPEGARRSEGAQAAGLAEHRGGQAQEHLRGSGDEEQDEPFLPSPTF) is disordered. Residues 513 to 528 (AEHRGGQAQEHLRGSG) show a composition bias toward basic and acidic residues. 2 C2H2-type zinc fingers span residues 555-577 (YECKVCKETFLHSSALIEHQKIH) and 610-632 (YECKVCGETFHHSAALREHQKTH). The C2H2-type 4; degenerate zinc-finger motif lies at 668-690 (YDFREGGDAFGRSSDFMEHQKIH). Disordered stretches follow at residues 704 to 747 (PLLH…EARG), 764 to 797 (FRPPRGLREDGEPSTYLSGLRDPPQKTPAWESPY), and 820 to 858 (DHLAGEGPSGWQRDGEASGPSSDGRQHQKARAKKKNIER). The span at 711–720 (MPGSQKSHTI) shows a compositional bias: polar residues. Residues 846 to 856 (HQKARAKKKNI) are compositionally biased toward basic residues. The C2H2-type 5 zinc finger occupies 884–906 (YECLECGEFFVRSSELAEHQKIH). 57 repeat units span residues 965–973 (PAQTSYAVE), 974–982 (PAQTSYAEE), 983–991 (PAQTSYTEA), 1001–1009 (PAQTSCIEE), 1010–1018 (PAQTSYTNP), 1028–1036 (PAQTSYTEA), 1046–1054 (PAQTSCIEE), 1055–1063 (PAQTSYTNP), 1073–1081 (PAQTSYTEA), 1091–1099 (PAQTNYTEE), 1109–1117 (PSQTSCIEE), 1118–1126 (PAQTSYTDP), 1136–1144 (PAQTSYTQE), 1145–1153 (PAQTSCTEE), 1154–1162 (PAQTSCTEE), 1163–1171 (PAQTSYTQE), 1172–1180 (PAQTSYTKE), 1190–1198 (PAQTSCIEE), 1199–1207 (PAQTNYTKE), 1217–1225 (PAQTSYTDP), 1235–1243 (PAQTNYTVE), 1253–1261 (PSQTSCIEE), 1280–1288 (PAQTSCTEE), 1289–1297 (PAQTSYTQE), 1298–1306 (PAQTSCTEE), 1307–1315 (PAQTSCTEE), 1316–1324 (PAQTSYTQE), 1325–1333 (PAQTSCTEE), 1334–1342 (PAQTSYTQE), 1343–1351 (PAQTSCTEE), 1352–1360 (PAQTSYTEE), 1361–1369 (PAQTSYTEE), 1370–1378 (PAQTSYTQE), 1379–1387 (PAQTSCTEE), 1388–1396 (PAQTSYTEE), 1397–1405 (PAQTSYTEE), 1406–1414 (PAQTSYTQE), 1415–1423 (PAQTSYTEE), 1424–1432 (PAQTSYTEE), 1433–1441 (PAQTSYAQE), 1442–1450 (PAQTSYAEE), 1451–1459 (PAQTSYAEE), 1460–1468 (PAQTSYAEE), 1469–1477 (PAQTSYTQE), 1478–1486 (PAQTNYTEE), 1496–1504 (PAQTSYAEE), 1505–1513 (PAQTSYPEE), 1514–1522 (PAQTSYAEE), 1523–1531 (PAQTSYAEE), 1532–1540 (PAQTSYPEE), 1541–1549 (PAQTSYTEE), 1550–1558 (PAQTSYAKE), 1559–1567 (PAQTSYPEE), 1568–1576 (PAQTSYAEE), 1577–1585 (PAQTSYAEE), 1586–1594 (PAQTSYAEE), and 1595–1603 (PAQTSYSEE). Polar residues-rich tracts occupy residues 965 to 989 (PAQTSYAVEPAQTSYAEEPAQTSYT) and 1001 to 1020 (PAQTSCIEEPAQTSYTNPAA). The interval 965 to 1603 (PAQTSYAVEP…EPAQTSYSEE (639 aa)) is 37 X 9 AA repeat of P-A-Q-T-X-Y-X-X-E. Residues 965–1651 (PAQTSYAVEP…RPDMPRNQPR (687 aa)) are disordered. Over residues 1046 to 1079 (PAQTSCIEEPAQTSYTNPAAETSYTEEPAQTSYT) the composition is skewed to polar residues. Polar residues-rich tracts occupy residues 1107-1178 (EEPS…TSYT), 1190-1206 (PAQTSCIEEPAQTNYTK), 1217-1242 (PAQTSYTDPAAETSYTEEPAQTNYTV), 1251-1484 (EEPS…TNYT), and 1496-1601 (PAQT…TSYS). The C2H2-type 6; degenerate zinc finger occupies 1859–1881 (NECKECGECFATVEDLGRHQKIY). Residues 1900–1921 (LGLDGSPEEELEEQEEPEEPED) form a disordered region. Acidic residues predominate over residues 1905-1921 (SPEEELEEQEEPEEPED). C2H2-type zinc fingers lie at residues 1924 to 1946 (YGCKDCGLGFADRADLRDHQKVH), 1980 to 2002 (YECPACGESFVHSSFLFEHQKVH), 2040 to 2062 (PQCQVCGQDFIHASVLSEHARGH), 2097 to 2119 (YECETCGESFPSQADLQEHMRVH), and 2148 to 2170 (YECKDCGKSFIHSTILTKHQKLH). The disordered stretch occupies residues 2059–2102 (ARGHAGEGLPDQGQGGAGAAGPGPAPTEPQQDPGEEQRYECETC). The disordered stretch occupies residues 2204–2322 (NVEAAEPEVE…DCGECGETFP (119 aa)). 2 stretches are compositionally biased toward acidic residues: residues 2208 to 2228 (AEPEVEAAEPEVEAAEPEVEA) and 2257 to 2311 (EQPD…EEPY). C2H2-type zinc fingers lie at residues 2312 to 2334 (YDCGECGETFPSGAAYAEHLTAH) and 2363 to 2385 (FKCDVCGQLFSDRLSLARHQNTH).

Belongs to the krueppel C2H2-type zinc-finger protein family. In terms of assembly, homodimer. Interacts with SIAH1A and SIAH2. Interacts with TRAF2. Expressed at high levels in the cerebellum and at moderate levels in the testis and ovary.

The protein localises to the nucleus. It is found in the cytoplasm. Its function is as follows. Induces apoptosis in cooperation with SIAH1A. Acts as a mediator between p53/TP53 and BAX in a neuronal death pathway that is activated by DNA damage. Acts synergistically with TRAF2 and inhibits TNF induced apoptosis through activation of NF-kappa-B. The chain is Paternally-expressed gene 3 protein (PEG3) from Bos taurus (Bovine).